The following is a 329-amino-acid chain: Major outer membrane protein P.IB (329 aa).

Residues 1–19 form the signal peptide; that stretch reads MKKSLIALTLAALPVAAMA.

This sequence belongs to the Gram-negative porin family. As to quaternary structure, homotrimer.

It is found in the cell outer membrane. Functionally, serves as a slightly cation selective porin. The sequence is that of Major outer membrane protein P.IB (porB) from Neisseria meningitidis serogroup A / serotype 4A (strain DSM 15465 / Z2491).